The chain runs to 444 residues: Trigger factor (444 aa).

The 86-residue stretch at 165-250 (GDFAKFDFEG…LHEIQELKIP (86 aa)) folds into the PPIase FKBP-type domain.

The protein belongs to the FKBP-type PPIase family. Tig subfamily.

It localises to the cytoplasm. The enzyme catalyses [protein]-peptidylproline (omega=180) = [protein]-peptidylproline (omega=0). In terms of biological role, involved in protein export. Acts as a chaperone by maintaining the newly synthesized protein in an open conformation. Functions as a peptidyl-prolyl cis-trans isomerase. The polypeptide is Trigger factor (Campylobacter jejuni subsp. jejuni serotype O:6 (strain 81116 / NCTC 11828)).